The sequence spans 293 residues: Bifunctional protein FolD (293 aa).

NADP(+)-binding positions include 169–171 (GRG), Thr-196, and Val-237.

This sequence belongs to the tetrahydrofolate dehydrogenase/cyclohydrolase family. In terms of assembly, homodimer.

It catalyses the reaction (6R)-5,10-methylene-5,6,7,8-tetrahydrofolate + NADP(+) = (6R)-5,10-methenyltetrahydrofolate + NADPH. The enzyme catalyses (6R)-5,10-methenyltetrahydrofolate + H2O = (6R)-10-formyltetrahydrofolate + H(+). It participates in one-carbon metabolism; tetrahydrofolate interconversion. In terms of biological role, catalyzes the oxidation of 5,10-methylenetetrahydrofolate to 5,10-methenyltetrahydrofolate and then the hydrolysis of 5,10-methenyltetrahydrofolate to 10-formyltetrahydrofolate. This is Bifunctional protein FolD from Leifsonia xyli subsp. xyli (strain CTCB07).